We begin with the raw amino-acid sequence, 676 residues long: Zinc finger protein 418 (676 aa).

The KRAB domain maps to valine 5 to leucine 91. 16 consecutive C2H2-type zinc fingers follow at residues histidine 82–histidine 105, cysteine 230–histidine 252, tyrosine 258–histidine 280, tyrosine 286–histidine 308, tyrosine 314–histidine 336, tyrosine 342–histidine 364, tyrosine 370–histidine 392, tyrosine 398–histidine 420, tyrosine 426–histidine 448, tyrosine 454–histidine 476, tyrosine 482–histidine 504, phenylalanine 510–histidine 532, tyrosine 538–histidine 560, tyrosine 591–histidine 613, tyrosine 619–histidine 641, and tyrosine 647–histidine 669.

This sequence belongs to the krueppel C2H2-type zinc-finger protein family. Highly expressed in heart.

The protein resides in the nucleus. In terms of biological role, transcriptional repressor. May play a role as regulator of the ubiquitin-proteasome system and autophagy-lysosomal pathway. This chain is Zinc finger protein 418 (ZNF418), found in Homo sapiens (Human).